Consider the following 809-residue polypeptide: Putative zinc metalloprotease TRE2 (809 aa).

Composition is skewed to polar residues over residues 1 to 12 (MRSSYQPVSTTN) and 20 to 30 (PTASSSHNLLM). The interval 1 to 66 (MRSSYQPVST…PSYEFDIEDP (66 aa)) is disordered. Over 1–125 (MRSSYQPVST…KIGNPFILRR (125 aa)) the chain is Cytoplasmic. Positions 37-50 (SPPSSNDNSIETNI) are enriched in low complexity. The chain crosses the membrane as a helical; Signal-anchor for type II membrane protein span at residues 126–146 (FFYIIFMSFIAYYVLSSGYLF). The Extracellular segment spans residues 147–809 (NEKASGSKGM…VEETNDIGYK (663 aa)). A glycan (N-linked (GlcNAc...) asparagine) is linked at asparagine 228. A PA domain is found at 255 to 349 (SNGKLSKVSL…STGDASGLNW (95 aa)). 2 N-linked (GlcNAc...) asparagine glycosylation sites follow: asparagine 669 and asparagine 736.

The protein belongs to the peptidase M28 family. M28B subfamily.

It is found in the membrane. This Saccharomyces cerevisiae (strain ATCC 204508 / S288c) (Baker's yeast) protein is Putative zinc metalloprotease TRE2 (TRE2).